Reading from the N-terminus, the 492-residue chain is Catalase-3 (492 aa).

Catalysis depends on residues His-65 and Asn-138. Tyr-348 is a heme binding site.

It belongs to the catalase family. Homotetramer and heterotetramer. At least six or seven isozymes are produced from a mixture of 3 gene products. Interacts with NCA1. Interacts with LSD1. Requires heme as cofactor.

The protein localises to the peroxisome. It catalyses the reaction 2 H2O2 = O2 + 2 H2O. Functionally, occurs in almost all aerobically respiring organisms and serves to protect cells from the toxic effects of hydrogen peroxide. The protein is Catalase-3 (CAT3) of Arabidopsis thaliana (Mouse-ear cress).